A 365-amino-acid polypeptide reads, in one-letter code: Histidine biosynthesis bifunctional protein HisB (365 aa).

Residues 1-176 (MTQQPTLFID…VADPKGLGQP (176 aa)) are histidinol-phosphatase. The active-site Nucleophile is Asp-10. The Mg(2+) site is built by Asp-10 and Asp-12. Asp-12 (proton donor) is an active-site residue. Positions 93, 95, 101, and 103 each coordinate Zn(2+). Residue Asp-130 participates in Mg(2+) binding. The segment at 177 to 365 (RHAVVARKTK…NEMPSSKGVL (189 aa)) is imidazoleglycerol-phosphate dehydratase.

In the N-terminal section; belongs to the histidinol-phosphatase family. The protein in the C-terminal section; belongs to the imidazoleglycerol-phosphate dehydratase family. The cofactor is Mg(2+). Zn(2+) serves as cofactor.

The protein localises to the cytoplasm. The catalysed reaction is D-erythro-1-(imidazol-4-yl)glycerol 3-phosphate = 3-(imidazol-4-yl)-2-oxopropyl phosphate + H2O. It catalyses the reaction L-histidinol phosphate + H2O = L-histidinol + phosphate. The protein operates within amino-acid biosynthesis; L-histidine biosynthesis; L-histidine from 5-phospho-alpha-D-ribose 1-diphosphate: step 6/9. It participates in amino-acid biosynthesis; L-histidine biosynthesis; L-histidine from 5-phospho-alpha-D-ribose 1-diphosphate: step 8/9. This chain is Histidine biosynthesis bifunctional protein HisB, found in Mannheimia succiniciproducens (strain KCTC 0769BP / MBEL55E).